A 338-amino-acid chain; its full sequence is Protein FosB (338 aa).

4 disordered regions span residues 1–54 (MFQA…PGSF), 79–191 (MAQS…DQLE), 222–276 (CKIP…PPNL), and 316–338 (GAQRTSGSDQPSDPLNSPSLLAL). Polar residues-rich tracts occupy residues 13-31 (SRCSSSPSAESQYLSSVDS) and 79-88 (MAQSQGQPLA). Ser-27 carries the post-translational modification Phosphoserine. Gly residues predominate over residues 113 to 124 (SSGGASGSGGPS). Low complexity predominate over residues 125-137 (TSGTTSGPGPARP). The 64-residue stretch at 155-218 (EEKRRVRRER…ERLEFVLVAH (64 aa)) folds into the bZIP domain. Residues 157-182 (KRRVRRERNKLAAAKCRNRRRELTDR) are basic motif. Residues 183–211 (LQAETDQLEEEKAELESEIAELQKEKERL) form a leucine-zipper region. Positions 256–265 (LPPPPPPPLP) are enriched in pro residues. 2 stretches are compositionally biased toward polar residues: residues 266–276 (FQTSQDAPPNL) and 318–338 (QRTSGSDQPSDPLNSPSLLAL).

This sequence belongs to the bZIP family. Fos subfamily. In terms of assembly, heterodimer; binds to DNA as heterodimer. Component of an AP-1 transcription factor complex; composed of FOS-JUN heterodimers. As part of the AP-1 transcription factor complex, forms heterodimers with JUN, JUNB or JUND, thereby binding to the AP-1 consensus sequence and stimulating transcription. Interacts with the BAF multiprotein chromatin-remodeling complex subunits SMARCB1 and SMARCD1. Interacts with ARID1A and JUN. Homodimer under oxidizing conditions and monomer under reducing conditions (in vitro). Heterodimer; binds to DNA as heterodimer. Forms heterodimers with JUNB, JUN or JUND; thereby binding to the AP-1 consensus sequence but does not stimulate transcription. Forms heterodimers with JUND under oxidizing conditions. Phosphorylated. In terms of processing, phosphorylated at Ser-27 by CSNK2A1; phosphorylation increases protein stability and transactivation potential. Expressed in the nucleus accumbens of the striatum (at protein level).

The protein localises to the nucleus. Functionally, heterodimerizes with proteins of the JUN family to form an AP-1 transcription factor complex, thereby enhancing their DNA binding activity to gene promoters containing an AP-1 consensus sequence 5'-TGA[GC]TCA-3' and enhancing their transcriptional activity. As part of the AP-1 complex, facilitates enhancer selection together with cell-type-specific transcription factors by collaboratively binding to nucleosomal enhancers and recruiting the SWI/SNF (BAF) chromatin remodeling complex to establish accessible chromatin. Together with JUN, plays a role in activation-induced cell death of T cells by binding to the AP-1 promoter site of FASLG/CD95L, and inducing its transcription in response to activation of the TCR/CD3 signaling pathway. Exhibits transactivation activity in vitro. Involved in the display of nurturing behavior towards newborns. May play a role in neurogenesis in the hippocampus and in learning and memory-related tasks by regulating the expression of various genes involved in neurogenesis, depression and epilepsy. Implicated in behavioral responses related to morphine reward and spatial memory. In terms of biological role, exhibits lower transactivation activity than isoform 1 in vitro. The heterodimer with JUN does not display any transcriptional activity, and may thereby act as an transcriptional inhibitor. May be involved in the regulation of neurogenesis in the hippocampus. May play a role in synaptic modifications in nucleus accumbens medium spiny neurons and thereby play a role in adaptive and pathological reward-dependent learning, including maladaptive responses involved in drug addiction. Seems to be more stably expressed with a half-life of ~9.5 hours in cell culture as compared to 1.5 hours half-life of isoform 1. The protein is Protein FosB (FOSB) of Homo sapiens (Human).